The sequence spans 394 residues: MIKLCREVWIEVNLDAVKKNLRAIRRHIPHKSKIMAVVKANGYGHGSIEVARHALEHGASELAVASVEEGIVLRKAGITAPILVLGFTSLSCVKKSAAWNITLSAFQVDWMKEANEILEKEASANRLAIHINVDTGMGRLGVRTKEELLEVVKALKASKFLRWTGIFTHFSTADEPDTTLTKLQHEKFISFLSFLKKQGIELPTVHMCNTAAAIAFPEFSADMIRLGIGLYGLYPSAYIKQLNLVKLEPALSLKARIAYVKTMRTEPRTVSYGATYIAEPNEVIATLPIGYADGYSRALSNRGFVLHRGKRVPVAGRVTMDMIMVSLGENGEGKQGDEVVIYGKQKGAEISVDEVAEMLNTINYEVVSTLSRRIPRFYIRDGEIFKVSTPVLYV.

Lys39 serves as the catalytic Proton acceptor; specific for D-alanine. Lys39 carries the post-translational modification N6-(pyridoxal phosphate)lysine. Arg139 serves as a coordination point for substrate. Tyr272 functions as the Proton acceptor; specific for L-alanine in the catalytic mechanism. Residue Met320 coordinates substrate.

It belongs to the alanine racemase family. Pyridoxal 5'-phosphate is required as a cofactor.

The catalysed reaction is L-alanine = D-alanine. The protein operates within amino-acid biosynthesis; D-alanine biosynthesis; D-alanine from L-alanine: step 1/1. Its function is as follows. Catalyzes the interconversion of L-alanine and D-alanine. May also act on other amino acids. The chain is Alanine racemase 2 (alr2) from Bacillus subtilis (strain 168).